Here is a 345-residue protein sequence, read N- to C-terminus: Holliday junction branch migration complex subunit RuvB (345 aa).

The disordered stretch occupies residues 1–22 (MIETDALSGGTPRRLVTQQPLS). The large ATPase domain (RuvB-L) stretch occupies residues 4-193 (TDALSGGTPR…FGIVARLEFY (190 aa)). ATP-binding positions include Leu-32, Arg-33, Gly-74, Lys-77, Thr-78, Thr-79, 140–142 (EDY), Arg-183, Tyr-193, and Arg-230. Thr-78 is a Mg(2+) binding site. The segment at 194-264 (TPEELTRIVR…VADAALSMLD (71 aa)) is small ATPAse domain (RuvB-S). The head domain (RuvB-H) stretch occupies residues 267–345 (PAGLDVMDRK…HFGFVPPERV (79 aa)). The DNA site is built by Arg-322 and Arg-327.

The protein belongs to the RuvB family. In terms of assembly, homohexamer. Forms an RuvA(8)-RuvB(12)-Holliday junction (HJ) complex. HJ DNA is sandwiched between 2 RuvA tetramers; dsDNA enters through RuvA and exits via RuvB. An RuvB hexamer assembles on each DNA strand where it exits the tetramer. Each RuvB hexamer is contacted by two RuvA subunits (via domain III) on 2 adjacent RuvB subunits; this complex drives branch migration. In the full resolvosome a probable DNA-RuvA(4)-RuvB(12)-RuvC(2) complex forms which resolves the HJ.

The protein localises to the cytoplasm. The catalysed reaction is ATP + H2O = ADP + phosphate + H(+). In terms of biological role, the RuvA-RuvB-RuvC complex processes Holliday junction (HJ) DNA during genetic recombination and DNA repair, while the RuvA-RuvB complex plays an important role in the rescue of blocked DNA replication forks via replication fork reversal (RFR). RuvA specifically binds to HJ cruciform DNA, conferring on it an open structure. The RuvB hexamer acts as an ATP-dependent pump, pulling dsDNA into and through the RuvAB complex. RuvB forms 2 homohexamers on either side of HJ DNA bound by 1 or 2 RuvA tetramers; 4 subunits per hexamer contact DNA at a time. Coordinated motions by a converter formed by DNA-disengaged RuvB subunits stimulates ATP hydrolysis and nucleotide exchange. Immobilization of the converter enables RuvB to convert the ATP-contained energy into a lever motion, pulling 2 nucleotides of DNA out of the RuvA tetramer per ATP hydrolyzed, thus driving DNA branch migration. The RuvB motors rotate together with the DNA substrate, which together with the progressing nucleotide cycle form the mechanistic basis for DNA recombination by continuous HJ branch migration. Branch migration allows RuvC to scan DNA until it finds its consensus sequence, where it cleaves and resolves cruciform DNA. The polypeptide is Holliday junction branch migration complex subunit RuvB (Laribacter hongkongensis (strain HLHK9)).